The primary structure comprises 744 residues: Adenosylcobalamin-dependent ribonucleoside-triphosphate reductase (744 aa).

Cys-120 and Cys-424 form a disulfide bridge. Positions 148 to 159 (SMPFSFLFDQLM) are effector region-1. Positions 169 to 318 (VDENINQIPK…ICNLIGKTVV (150 aa)) are effector region-2. Residues Cys-413 and Glu-415 contribute to the active site. Residues 570–631 (FHYSGYLIQR…SDNFASAGTV (62 aa)) form an adenosylcobalamin-binding-1 region. Residues 690–729 (LKQAPKEPISKEKYEKADNHITGNVEIVFEQTNEDQKGLE) are adenosylcobalamin-binding-2.

The protein belongs to the class II ribonucleoside-triphosphate reductase family. As to quaternary structure, monomer. Adenosylcob(III)alamin is required as a cofactor.

It carries out the reaction a 2'-deoxyribonucleoside 5'-triphosphate + [thioredoxin]-disulfide + H2O = a ribonucleoside 5'-triphosphate + [thioredoxin]-dithiol. Allosterically regulated by ATP and dNTP. In Lactobacillus gasseri (strain ATCC 33323 / DSM 20243 / BCRC 14619 / CIP 102991 / JCM 1131 / KCTC 3163 / NCIMB 11718 / NCTC 13722 / AM63), this protein is Adenosylcobalamin-dependent ribonucleoside-triphosphate reductase (rtpR).